Reading from the N-terminus, the 202-residue chain is Solute carrier family 66 member 3 (202 aa).

Residues 1–19 form the signal peptide; sequence MEAGLLWFCNWSTLGVCAA. A run of 4 helical transmembrane segments spans residues 33-53, 64-84, 94-114, and 171-191; these read SARG…LVFL, LTYL…LFVF, LPYM…KWII, and LTIL…TATV.

Its subcellular location is the membrane. The polypeptide is Solute carrier family 66 member 3 (Slc66a3) (Mus musculus (Mouse)).